The primary structure comprises 185 residues: Ribulose bisphosphate carboxylase small subunit, chloroplastic 2 (185 aa).

The transit peptide at 1–45 (MAAVIAKSSVSAAVARPARSSVRPMAALKPAVKAAPVAAPAQANQ) directs the protein to the chloroplast. Met46 is modified (N-methylmethionine).

It belongs to the RuBisCO small chain family. In terms of assembly, heterohexadecamer of 8 large and 8 small subunits.

It is found in the plastid. It localises to the chloroplast. Its subcellular location is the chloroplast stroma. RuBisCO catalyzes two reactions: the carboxylation of D-ribulose 1,5-bisphosphate, the primary event in carbon dioxide fixation, as well as the oxidative fragmentation of the pentose substrate. Both reactions occur simultaneously and in competition at the same active site. Although the small subunit is not catalytic it is essential for maximal activity. The protein is Ribulose bisphosphate carboxylase small subunit, chloroplastic 2 of Chlamydomonas reinhardtii (Chlamydomonas smithii).